The primary structure comprises 196 residues: DnaA initiator-associating protein DiaA (196 aa).

Residues 34-196 (LVHSLLNGNK…DNTLFPHQDD (163 aa)) form the SIS domain.

The protein belongs to the SIS family. DiaA subfamily. Homotetramer; dimer of dimers.

In terms of biological role, required for the timely initiation of chromosomal replication via direct interactions with the DnaA initiator protein. In Citrobacter koseri (strain ATCC BAA-895 / CDC 4225-83 / SGSC4696), this protein is DnaA initiator-associating protein DiaA.